A 1375-amino-acid chain; its full sequence is DNA-directed RNA polymerase subunit beta (1375 aa).

This sequence belongs to the RNA polymerase beta chain family. The RNAP catalytic core consists of 2 alpha, 1 beta, 1 beta' and 1 omega subunit. When a sigma factor is associated with the core the holoenzyme is formed, which can initiate transcription.

It catalyses the reaction RNA(n) + a ribonucleoside 5'-triphosphate = RNA(n+1) + diphosphate. DNA-dependent RNA polymerase catalyzes the transcription of DNA into RNA using the four ribonucleoside triphosphates as substrates. The polypeptide is DNA-directed RNA polymerase subunit beta (Methylibium petroleiphilum (strain ATCC BAA-1232 / LMG 22953 / PM1)).